Here is a 314-residue protein sequence, read N- to C-terminus: MNSYLEFEKPVAQLEARIAELRSAAEGDEVDISNELKRLERKSAALLTSTYSALTPWQKTQVARHPQRPHFRDFVKHAFDEFVPLGGDRNYGEDEAIMGGLATLRGRKVVLIGHEKGNDTESRLRHNFGMGKPEGYRKAIRLMDLAGRFGLPVVTLVDTSGAFPGVEAEERGQAEAIARSTEACLALPVPMVATIVGEGGSGGAVALASAERVLMLEHAVYSVISPEGCASILWRTAEKAPDAAEAMKVTAQHLLDLKVIDRIVKEPTGGAHRDPSAICETLANAIDEELDALADLPGETLRRMREERFLQIGG.

The CoA carboxyltransferase C-terminal domain occupies 38–292 (RLERKSAALL…ANAIDEELDA (255 aa)).

The protein belongs to the AccA family. As to quaternary structure, acetyl-CoA carboxylase is a heterohexamer composed of biotin carboxyl carrier protein (AccB), biotin carboxylase (AccC) and two subunits each of ACCase subunit alpha (AccA) and ACCase subunit beta (AccD).

It is found in the cytoplasm. The enzyme catalyses N(6)-carboxybiotinyl-L-lysyl-[protein] + acetyl-CoA = N(6)-biotinyl-L-lysyl-[protein] + malonyl-CoA. Its pathway is lipid metabolism; malonyl-CoA biosynthesis; malonyl-CoA from acetyl-CoA: step 1/1. In terms of biological role, component of the acetyl coenzyme A carboxylase (ACC) complex. First, biotin carboxylase catalyzes the carboxylation of biotin on its carrier protein (BCCP) and then the CO(2) group is transferred by the carboxyltransferase to acetyl-CoA to form malonyl-CoA. The sequence is that of Acetyl-coenzyme A carboxylase carboxyl transferase subunit alpha from Erythrobacter litoralis (strain HTCC2594).